Here is a 366-residue protein sequence, read N- to C-terminus: Phospho-N-acetylmuramoyl-pentapeptide-transferase (366 aa).

Helical transmembrane passes span 27–47 (AALFTSALIVFLFGPAMIASL), 71–91 (TPTMGGLMILAGIVVSSLLWA), 93–113 (LSSIYVVSTLLVTLGFGAIGF), 138–158 (FVIASIAVFFMMQAALSAGAA), 174–194 (LMLNLGYFFVLFGGFVIVGAG), 205–225 (GLAIVPVMIASAAFGLIAYLA), 245–265 (LAVILGAVIGAGLGFLWFNAP), 268–288 (AIFMGDTGSLALGGLIGTVAV), 297–317 (VIIGGLFVMETLSVIIQVFWF), and 343–363 (QVVIRFWIIAVILAMVGLSTL).

The protein belongs to the glycosyltransferase 4 family. MraY subfamily. The cofactor is Mg(2+).

Its subcellular location is the cell inner membrane. The enzyme catalyses UDP-N-acetyl-alpha-D-muramoyl-L-alanyl-gamma-D-glutamyl-meso-2,6-diaminopimeloyl-D-alanyl-D-alanine + di-trans,octa-cis-undecaprenyl phosphate = di-trans,octa-cis-undecaprenyl diphospho-N-acetyl-alpha-D-muramoyl-L-alanyl-D-glutamyl-meso-2,6-diaminopimeloyl-D-alanyl-D-alanine + UMP. It participates in cell wall biogenesis; peptidoglycan biosynthesis. In terms of biological role, catalyzes the initial step of the lipid cycle reactions in the biosynthesis of the cell wall peptidoglycan: transfers peptidoglycan precursor phospho-MurNAc-pentapeptide from UDP-MurNAc-pentapeptide onto the lipid carrier undecaprenyl phosphate, yielding undecaprenyl-pyrophosphoryl-MurNAc-pentapeptide, known as lipid I. This is Phospho-N-acetylmuramoyl-pentapeptide-transferase from Sinorhizobium medicae (strain WSM419) (Ensifer medicae).